Reading from the N-terminus, the 911-residue chain is Gag-Pro polyprotein (911 aa).

Positions 101–161 (AAVAQTEEIL…TKKPKRFPVL (61 aa)) are excised as a propeptide. Composition is skewed to polar residues over residues 113-125 (NSQTDLTKTSQNP) and 140-152 (KSSSLQDKGLSST). The interval 113–178 (NSQTDLTKTS…DPEDPNPSEV (66 aa)) is disordered. The PPXY motif signature appears at 202–205 (PPPY). A PTAP/PSAP motif motif is present at residues 210–213 (PSAP). Residues 216–257 (MAVVNPKEELKEKIAQLEEQIKLEELHQALISKLQKLKTGNE) adopt a coiled-coil conformation. Residues 260 to 279 (THPDTAGGLSRTPHWPGQHI) are disordered. 2 consecutive CCHC-type zinc fingers follow at residues 547-564 (GCCFKCGKKGHFAKNCHE) and 576-593 (GLCPRCKRGKHWANECKS). Residues 592-626 (KSKTDNQGNPIPPHQGNRVEGPAPGPETSLWGSQL) are disordered. The 77-residue stretch at 780–856 (FTGLIDTGAD…LPVNLWGRDL (77 aa)) folds into the Peptidase A2 domain. D785 (protease; shared with dimeric partner) is an active-site residue. The G-patch domain occupies 867–911 (PNDIVTAQMLAQGYSPGKGLGKKENGILHPIPNQGQSNKKGFGNF).

As to quaternary structure, homodimer. Interacts with the reverse transcriptase/ribonuclease H. In terms of assembly, homotrimer. Released by autocatalytic processing. The protease can undergo further autoprocessing to yield 2 shorter but enzymatically active forms of 12 kDa and 13 kDa without the GDP domain. the 12 kDa form is monomeric. Post-translationally, myristoylated. Myristoylation of the matrix (MA) domain mediates the transport and binding of Gag polyproteins to the host plasma membrane and is required for the assembly of viral particles. In terms of processing, specific enzymatic cleavages in vivo yield mature proteins.

The protein localises to the virion. The catalysed reaction is dUTP + H2O = dUMP + diphosphate + H(+). Its function is as follows. Matrix protein. In terms of biological role, nucleocapsid protein p14: Nucleocapsid protein. Functionally, capsid protein. The aspartyl protease mediates proteolytic cleavages of Gag and Gag-Pol polyproteins during or shortly after the release of the virion from the plasma membrane. Cleavages take place as an ordered, step-wise cascade to yield mature proteins. This process is called maturation. Displays maximal activity during the budding process just prior to particle release from the cell. Its function is as follows. Enhances the activity of the reverse transcriptase. May be part of the mature RT. The protein is Gag-Pro polyprotein (gag-pro) of Mason-Pfizer monkey virus (MPMV).